The primary structure comprises 408 residues: Succinylornithine transaminase (408 aa).

Lys252 bears the N6-(pyridoxal phosphate)lysine mark.

This sequence belongs to the class-III pyridoxal-phosphate-dependent aminotransferase family. AstC subfamily. The cofactor is pyridoxal 5'-phosphate.

The enzyme catalyses N(2)-succinyl-L-ornithine + 2-oxoglutarate = N-succinyl-L-glutamate 5-semialdehyde + L-glutamate. Its pathway is amino-acid degradation; L-arginine degradation via AST pathway; L-glutamate and succinate from L-arginine: step 3/5. Catalyzes the transamination of N(2)-succinylornithine and alpha-ketoglutarate into N(2)-succinylglutamate semialdehyde and glutamate. Can also act as an acetylornithine aminotransferase. The sequence is that of Succinylornithine transaminase from Salmonella agona (strain SL483).